A 41-amino-acid polypeptide reads, in one-letter code: Augerpeptide hhe6.1 (41 aa).

3 disulfides stabilise this stretch: Cys-11–Cys-32, Cys-18–Cys-35, and Cys-31–Cys-40.

Expressed by the venom duct.

Its subcellular location is the secreted. This chain is Augerpeptide hhe6.1, found in Hastula hectica (Sea snail).